Here is a 533-residue protein sequence, read N- to C-terminus: Probable protein kinase UbiB (533 aa).

The helical transmembrane segment at L24–W44 threads the bilayer. In terms of domain architecture, Protein kinase spans R126–G494. Residues L132–V140 and K154 each bind ATP. Residue D289 is the Proton acceptor of the active site. The helical transmembrane segment at L510–I530 threads the bilayer.

The protein belongs to the ABC1 family. UbiB subfamily.

Its subcellular location is the cell inner membrane. It participates in cofactor biosynthesis; ubiquinone biosynthesis [regulation]. In terms of biological role, is probably a protein kinase regulator of UbiI activity which is involved in aerobic coenzyme Q (ubiquinone) biosynthesis. The protein is Probable protein kinase UbiB of Pseudomonas aeruginosa (strain ATCC 15692 / DSM 22644 / CIP 104116 / JCM 14847 / LMG 12228 / 1C / PRS 101 / PAO1).